We begin with the raw amino-acid sequence, 353 residues long: Colistin resistance protein EmrA (353 aa).

Residues 21 to 41 (WGVFSVLLLFLVAGILYYFFV) form a helical membrane-spanning segment. Positions 132–204 (VVAAQADLAR…QASRAQLLAD (73 aa)) form a coiled coil.

Belongs to the membrane fusion protein (MFP) (TC 8.A.1) family.

The protein resides in the cell inner membrane. In terms of biological role, probably part of an efflux pump system that contributes to adaptation to osmotic stress and resistance to colistin. The protein is Colistin resistance protein EmrA of Acinetobacter baumannii (strain ATCC 17978 / DSM 105126 / CIP 53.77 / LMG 1025 / NCDC KC755 / 5377).